The following is a 174-amino-acid chain: 2-C-methyl-D-erythritol 2,4-cyclodiphosphate synthase (174 aa).

D13, H15, and H61 together coordinate a divalent metal cation. 13-15 (DAH) provides a ligand contact to 4-CDP-2-C-methyl-D-erythritol 2-phosphate. 4-CDP-2-C-methyl-D-erythritol 2-phosphate contacts are provided by residues 75-77 (DIG), 149-152 (TTTD), F156, and H159.

Belongs to the IspF family. As to quaternary structure, homotrimer. Requires a divalent metal cation as cofactor.

It carries out the reaction 4-CDP-2-C-methyl-D-erythritol 2-phosphate = 2-C-methyl-D-erythritol 2,4-cyclic diphosphate + CMP. The protein operates within isoprenoid biosynthesis; isopentenyl diphosphate biosynthesis via DXP pathway; isopentenyl diphosphate from 1-deoxy-D-xylulose 5-phosphate: step 4/6. Functionally, involved in the biosynthesis of isopentenyl diphosphate (IPP) and dimethylallyl diphosphate (DMAPP), two major building blocks of isoprenoid compounds. Catalyzes the conversion of 4-diphosphocytidyl-2-C-methyl-D-erythritol 2-phosphate (CDP-ME2P) to 2-C-methyl-D-erythritol 2,4-cyclodiphosphate (ME-CPP) with a corresponding release of cytidine 5-monophosphate (CMP). In Bifidobacterium longum (strain NCC 2705), this protein is 2-C-methyl-D-erythritol 2,4-cyclodiphosphate synthase.